We begin with the raw amino-acid sequence, 298 residues long: Probable prolyl 4-hydroxylase 4 (298 aa).

The Cytoplasmic portion of the chain corresponds to 1–6; the sequence is MARRGL. The helical; Signal-anchor for type II membrane protein transmembrane segment at 7–25 threads the bilayer; it reads LISFFAIFSVLLQSSTSLI. Over 26–298 the chain is Lumenal; sequence SSSSVFVNPS…GYCRRSCKAC (273 aa). A glycan (N-linked (GlcNAc...) asparagine) is linked at asparagine 77. In terms of domain architecture, Fe2OG dioxygenase spans 120–245; it reads NGEDIQVLRY…KWSATKWIHV (126 aa). Fe cation contacts are provided by histidine 138 and aspartate 140. An N-linked (GlcNAc...) asparagine glycan is attached at asparagine 164. Residue histidine 226 coordinates Fe cation. 2-oxoglutarate is bound at residue lysine 236. Residues asparagine 257 and asparagine 262 are each glycosylated (N-linked (GlcNAc...) asparagine). A ShKT domain is found at 258 to 298; it reads CTDMNESCERWAVLGECTKNPEYMVGTTELPGYCRRSCKAC. Cystine bridges form between cysteine 258-cysteine 298, cysteine 265-cysteine 291, and cysteine 274-cysteine 295.

This sequence belongs to the P4HA family. It depends on Fe(2+) as a cofactor. Requires L-ascorbate as cofactor.

Its subcellular location is the endoplasmic reticulum membrane. The catalysed reaction is L-prolyl-[collagen] + 2-oxoglutarate + O2 = trans-4-hydroxy-L-prolyl-[collagen] + succinate + CO2. Its function is as follows. Catalyzes the post-translational formation of 4-hydroxyproline in -Xaa-Pro-Gly- sequences in proline-rich peptide sequences of plant glycoproteins and other proteins. Hydroxyprolines are important constituent of many plant cell wall glycoproteins such as extensins, hydroxyproline-rich glycoproteins, lectins and arabinogalactan proteins. This is Probable prolyl 4-hydroxylase 4 from Arabidopsis thaliana (Mouse-ear cress).